Here is a 318-residue protein sequence, read N- to C-terminus: MKSLNIIFAGTPDFAAQHLQAILNSQHNVIAVYTQPDKPAGRGKKLQASPVKQLAEQNDIPVYQPKSLRKEEVQSELKALNADVIVVVAYGLILPKVVLDAPRLGCLNVHGSILPRWRGAAPIQRSIWAGDAQTGVTIMQMDEGLDTGDMLHKVYCDILPTETSTSLYNKLAELAPSALIDVLDNLESGKFTAEKQDDSQSNYAEKLSKEEAQLDWSLPAVQLERNIRAFNPWPIAYFSTEDRDGNAQTLKVYQAEVLPHQDKPAGTILSADKNGIQIATVDGVLNLLQLQPAGKKLMSAQDLLNGRAEWFAIGKVLA.

(6S)-5,6,7,8-tetrahydrofolate is bound at residue 112-115; the sequence is SILP.

Belongs to the Fmt family.

It catalyses the reaction L-methionyl-tRNA(fMet) + (6R)-10-formyltetrahydrofolate = N-formyl-L-methionyl-tRNA(fMet) + (6S)-5,6,7,8-tetrahydrofolate + H(+). In terms of biological role, attaches a formyl group to the free amino group of methionyl-tRNA(fMet). The formyl group appears to play a dual role in the initiator identity of N-formylmethionyl-tRNA by promoting its recognition by IF2 and preventing the misappropriation of this tRNA by the elongation apparatus. The chain is Methionyl-tRNA formyltransferase from Haemophilus influenzae (strain PittEE).